The following is a 339-amino-acid chain: Glycerol-3-phosphate dehydrogenase [NAD(P)+] (339 aa).

The NADPH site is built by serine 15, tyrosine 16, histidine 36, and lysine 110. Residues lysine 110, glycine 139, and threonine 141 each coordinate sn-glycerol 3-phosphate. Position 143 (alanine 143) interacts with NADPH. The sn-glycerol 3-phosphate site is built by lysine 195, aspartate 248, serine 258, arginine 259, and asparagine 260. Residue lysine 195 is the Proton acceptor of the active site. NADPH is bound at residue arginine 259. NADPH-binding residues include valine 283 and glutamate 285.

This sequence belongs to the NAD-dependent glycerol-3-phosphate dehydrogenase family.

It is found in the cytoplasm. It catalyses the reaction sn-glycerol 3-phosphate + NAD(+) = dihydroxyacetone phosphate + NADH + H(+). The enzyme catalyses sn-glycerol 3-phosphate + NADP(+) = dihydroxyacetone phosphate + NADPH + H(+). Its pathway is membrane lipid metabolism; glycerophospholipid metabolism. In terms of biological role, catalyzes the reduction of the glycolytic intermediate dihydroxyacetone phosphate (DHAP) to sn-glycerol 3-phosphate (G3P), the key precursor for phospholipid synthesis. This is Glycerol-3-phosphate dehydrogenase [NAD(P)+] from Citrobacter koseri (strain ATCC BAA-895 / CDC 4225-83 / SGSC4696).